Here is a 76-residue protein sequence, read N- to C-terminus: EIPQNLGSGIPHDRIKLPNGQWCKTPGDLCSSSSECCKAKHSNSVTYASFCSREWSGQQGLFINQCRTCNVESSMC.

4 cysteine pairs are disulfide-bonded: Cys23-Cys37, Cys30-Cys51, Cys36-Cys66, and Cys69-Cys76.

This sequence belongs to the neurotoxin 21 family. In terms of tissue distribution, expressed by the venom gland.

It is found in the secreted. Neurotoxin with probable ion channel impairing activity. Is both paralytic and lethal, when injected into lepidopteran larvae. In Apomastus schlingeri (Trap-door spider), this protein is U1-cyrtautoxin-As1b.